Reading from the N-terminus, the 495-residue chain is Glutamyl-tRNA(Gln) amidotransferase subunit A (495 aa).

Residues Lys78 and Ser158 each act as charge relay system in the active site. The Acyl-ester intermediate role is filled by Ser182.

The protein belongs to the amidase family. GatA subfamily. Heterotrimer of A, B and C subunits.

The catalysed reaction is L-glutamyl-tRNA(Gln) + L-glutamine + ATP + H2O = L-glutaminyl-tRNA(Gln) + L-glutamate + ADP + phosphate + H(+). Its function is as follows. Allows the formation of correctly charged Gln-tRNA(Gln) through the transamidation of misacylated Glu-tRNA(Gln) in organisms which lack glutaminyl-tRNA synthetase. The reaction takes place in the presence of glutamine and ATP through an activated gamma-phospho-Glu-tRNA(Gln). The protein is Glutamyl-tRNA(Gln) amidotransferase subunit A of Ruegeria sp. (strain TM1040) (Silicibacter sp.).